Here is a 286-residue protein sequence, read N- to C-terminus: Pantothenate synthetase (286 aa).

ATP is bound at residue 30–37; it reads MGALHEGH. His37 functions as the Proton donor in the catalytic mechanism. Residue Gln61 participates in (R)-pantoate binding. Gln61 contacts beta-alanine. 147 to 150 lines the ATP pocket; the sequence is GEKD. Gln153 contacts (R)-pantoate. ATP is bound by residues Val180 and 188–191; that span reads LSSR.

This sequence belongs to the pantothenate synthetase family. In terms of assembly, homodimer.

It is found in the cytoplasm. It carries out the reaction (R)-pantoate + beta-alanine + ATP = (R)-pantothenate + AMP + diphosphate + H(+). It participates in cofactor biosynthesis; (R)-pantothenate biosynthesis; (R)-pantothenate from (R)-pantoate and beta-alanine: step 1/1. Its function is as follows. Catalyzes the condensation of pantoate with beta-alanine in an ATP-dependent reaction via a pantoyl-adenylate intermediate. This Novosphingobium aromaticivorans (strain ATCC 700278 / DSM 12444 / CCUG 56034 / CIP 105152 / NBRC 16084 / F199) protein is Pantothenate synthetase.